We begin with the raw amino-acid sequence, 81 residues long: Costars family protein ABRACL (81 aa).

M1 is modified (N-acetylmethionine).

The protein belongs to the costars family.

The polypeptide is Costars family protein ABRACL (Abracl) (Mus musculus (Mouse)).